The chain runs to 185 residues: Ribose 1,5-bisphosphate phosphokinase PhnN (185 aa).

13–20 (GPSGAGKD) contributes to the ATP binding site.

The protein belongs to the ribose 1,5-bisphosphokinase family.

The enzyme catalyses alpha-D-ribose 1,5-bisphosphate + ATP = 5-phospho-alpha-D-ribose 1-diphosphate + ADP. It participates in metabolic intermediate biosynthesis; 5-phospho-alpha-D-ribose 1-diphosphate biosynthesis; 5-phospho-alpha-D-ribose 1-diphosphate from D-ribose 5-phosphate (route II): step 3/3. Its function is as follows. Catalyzes the phosphorylation of ribose 1,5-bisphosphate to 5-phospho-D-ribosyl alpha-1-diphosphate (PRPP). This Chromobacterium violaceum (strain ATCC 12472 / DSM 30191 / JCM 1249 / CCUG 213 / NBRC 12614 / NCIMB 9131 / NCTC 9757 / MK) protein is Ribose 1,5-bisphosphate phosphokinase PhnN.